A 164-amino-acid chain; its full sequence is 6,7-dimethyl-8-ribityllumazine synthase 1 (164 aa).

Residues F27, 58 to 60 (SLE), and 87 to 89 (TII) contribute to the 5-amino-6-(D-ribitylamino)uracil site. Residue 92-93 (DT) participates in (2S)-2-hydroxy-3-oxobutyl phosphate binding. The active-site Proton donor is the H95. N120 provides a ligand contact to 5-amino-6-(D-ribitylamino)uracil. R134 serves as a coordination point for (2S)-2-hydroxy-3-oxobutyl phosphate.

It belongs to the DMRL synthase family. In terms of assembly, homopentamer.

It carries out the reaction (2S)-2-hydroxy-3-oxobutyl phosphate + 5-amino-6-(D-ribitylamino)uracil = 6,7-dimethyl-8-(1-D-ribityl)lumazine + phosphate + 2 H2O + H(+). The protein operates within cofactor biosynthesis; riboflavin biosynthesis; riboflavin from 2-hydroxy-3-oxobutyl phosphate and 5-amino-6-(D-ribitylamino)uracil: step 1/2. Functionally, catalyzes the formation of 6,7-dimethyl-8-ribityllumazine by condensation of 5-amino-6-(D-ribitylamino)uracil with 3,4-dihydroxy-2-butanone 4-phosphate. This is the penultimate step in the biosynthesis of riboflavin. This Mesorhizobium japonicum (strain LMG 29417 / CECT 9101 / MAFF 303099) (Mesorhizobium loti (strain MAFF 303099)) protein is 6,7-dimethyl-8-ribityllumazine synthase 1 (ribH1).